We begin with the raw amino-acid sequence, 290 residues long: Fructose-1,6-bisphosphatase class 1 (290 aa).

Mg(2+) contacts are provided by E78, D96, L98, and D99. Residues 99–102 (DGSS), Y201, and K226 contribute to the substrate site. Residue E232 participates in Mg(2+) binding.

It belongs to the FBPase class 1 family. Homotetramer. Mg(2+) is required as a cofactor.

The protein resides in the cytoplasm. It carries out the reaction beta-D-fructose 1,6-bisphosphate + H2O = beta-D-fructose 6-phosphate + phosphate. It functions in the pathway carbohydrate biosynthesis; gluconeogenesis. The polypeptide is Fructose-1,6-bisphosphatase class 1 (Helicobacter pylori (strain ATCC 700392 / 26695) (Campylobacter pylori)).